The sequence spans 119 residues: Large ribosomal subunit protein bL20 (119 aa).

It belongs to the bacterial ribosomal protein bL20 family.

Binds directly to 23S ribosomal RNA and is necessary for the in vitro assembly process of the 50S ribosomal subunit. It is not involved in the protein synthesizing functions of that subunit. The polypeptide is Large ribosomal subunit protein bL20 (Colwellia psychrerythraea (strain 34H / ATCC BAA-681) (Vibrio psychroerythus)).